Reading from the N-terminus, the 158-residue chain is MQGRVSVWLSQHKLAHRPSGFDYQGIEIIQIKSEDWPSIAVALYIYGFNYLRSQCAYDVMPGGFLASVYHLTKLQDNADQPEEVCIKILVSRESPKIPSIFWVWKSADFQERESYDMSGIHYESHPRLKRILMPESWIGWPLRKDYVVPNFYELQDAY.

This sequence belongs to the complex I 30 kDa subunit family. NDH is composed of at least 16 different subunits, 5 of which are encoded in the nucleus.

It is found in the plastid. The protein resides in the chloroplast thylakoid membrane. The catalysed reaction is a plastoquinone + NADH + (n+1) H(+)(in) = a plastoquinol + NAD(+) + n H(+)(out). It carries out the reaction a plastoquinone + NADPH + (n+1) H(+)(in) = a plastoquinol + NADP(+) + n H(+)(out). In terms of biological role, NDH shuttles electrons from NAD(P)H:plastoquinone, via FMN and iron-sulfur (Fe-S) centers, to quinones in the photosynthetic chain and possibly in a chloroplast respiratory chain. The immediate electron acceptor for the enzyme in this species is believed to be plastoquinone. Couples the redox reaction to proton translocation, and thus conserves the redox energy in a proton gradient. The sequence is that of NAD(P)H-quinone oxidoreductase subunit J, chloroplastic from Psilotum nudum (Whisk fern).